The chain runs to 336 residues: Holliday junction branch migration complex subunit RuvB (336 aa).

Residues 1 to 184 form a large ATPase domain (RuvB-L) region; sequence MYDEERIVSG…FGIVGHMEYY (184 aa). Residues L23, R24, G65, K68, T69, T70, 131–133, R174, Y184, and R221 each bind ATP; that span reads EDY. T69 contributes to the Mg(2+) binding site. Positions 185–255 are small ATPAse domain (RuvB-S); sequence NEVDLSQIIK…IVQFALDLLR (71 aa). The head domain (RuvB-H) stretch occupies residues 258–336; the sequence is KVGLDRTDRK…HLGIKYNKEG (79 aa). Residues R313 and R318 each contribute to the DNA site.

It belongs to the RuvB family. In terms of assembly, homohexamer. Forms an RuvA(8)-RuvB(12)-Holliday junction (HJ) complex. HJ DNA is sandwiched between 2 RuvA tetramers; dsDNA enters through RuvA and exits via RuvB. An RuvB hexamer assembles on each DNA strand where it exits the tetramer. Each RuvB hexamer is contacted by two RuvA subunits (via domain III) on 2 adjacent RuvB subunits; this complex drives branch migration. In the full resolvosome a probable DNA-RuvA(4)-RuvB(12)-RuvC(2) complex forms which resolves the HJ.

It is found in the cytoplasm. The catalysed reaction is ATP + H2O = ADP + phosphate + H(+). Its function is as follows. The RuvA-RuvB-RuvC complex processes Holliday junction (HJ) DNA during genetic recombination and DNA repair, while the RuvA-RuvB complex plays an important role in the rescue of blocked DNA replication forks via replication fork reversal (RFR). RuvA specifically binds to HJ cruciform DNA, conferring on it an open structure. The RuvB hexamer acts as an ATP-dependent pump, pulling dsDNA into and through the RuvAB complex. RuvB forms 2 homohexamers on either side of HJ DNA bound by 1 or 2 RuvA tetramers; 4 subunits per hexamer contact DNA at a time. Coordinated motions by a converter formed by DNA-disengaged RuvB subunits stimulates ATP hydrolysis and nucleotide exchange. Immobilization of the converter enables RuvB to convert the ATP-contained energy into a lever motion, pulling 2 nucleotides of DNA out of the RuvA tetramer per ATP hydrolyzed, thus driving DNA branch migration. The RuvB motors rotate together with the DNA substrate, which together with the progressing nucleotide cycle form the mechanistic basis for DNA recombination by continuous HJ branch migration. Branch migration allows RuvC to scan DNA until it finds its consensus sequence, where it cleaves and resolves cruciform DNA. This chain is Holliday junction branch migration complex subunit RuvB, found in Ligilactobacillus salivarius (strain UCC118) (Lactobacillus salivarius).